The following is a 372-amino-acid chain: Cytochrome b (372 aa).

Helical transmembrane passes span 25-45 (FGSM…FLAI), 69-90 (WCLQ…YIHI), 105-125 (WMSG…GYVL), and 170-190 (FFAL…IHII). 2 residues coordinate heme b: H75 and H89. The heme b site is built by H174 and H188. A ubiquinone is bound at residue H193. Transmembrane regions (helical) follow at residues 218–238 (YKDL…MSFS), 280–300 (LGGT…PFTH), 312–332 (MAQF…WAAS), and 339–358 (YITI…IINP).

It belongs to the cytochrome b family. The cytochrome bc1 complex contains 3 respiratory subunits (MT-CYB, CYC1 and UQCRFS1), 2 core proteins (UQCRC1 and UQCRC2) and probably 6 low-molecular weight proteins. Requires heme b as cofactor.

The protein localises to the mitochondrion inner membrane. Functionally, component of the ubiquinol-cytochrome c reductase complex (complex III or cytochrome b-c1 complex) that is part of the mitochondrial respiratory chain. The b-c1 complex mediates electron transfer from ubiquinol to cytochrome c. Contributes to the generation of a proton gradient across the mitochondrial membrane that is then used for ATP synthesis. The chain is Cytochrome b (MT-CYB) from Acrochordus granulatus (Rasp-skinned water snake).